We begin with the raw amino-acid sequence, 238 residues long: Flagellar L-ring protein (238 aa).

The N-terminal stretch at 1–16 (MNKAILAVAMVLLLAG) is a signal peptide. Cys-17 carries N-palmitoyl cysteine lipidation. The S-diacylglycerol cysteine moiety is linked to residue Cys-17.

Belongs to the FlgH family. In terms of assembly, the basal body constitutes a major portion of the flagellar organelle and consists of four rings (L,P,S, and M) mounted on a central rod.

Its subcellular location is the cell outer membrane. The protein localises to the bacterial flagellum basal body. Assembles around the rod to form the L-ring and probably protects the motor/basal body from shearing forces during rotation. The polypeptide is Flagellar L-ring protein (Brucella melitensis biotype 2 (strain ATCC 23457)).